Reading from the N-terminus, the 198-residue chain is ATP-dependent Clp protease proteolytic subunit (198 aa).

The active-site Nucleophile is the Ser103. Residue His128 is part of the active site.

This sequence belongs to the peptidase S14 family. Fourteen ClpP subunits assemble into 2 heptameric rings which stack back to back to give a disk-like structure with a central cavity, resembling the structure of eukaryotic proteasomes.

The protein resides in the cytoplasm. It carries out the reaction Hydrolysis of proteins to small peptides in the presence of ATP and magnesium. alpha-casein is the usual test substrate. In the absence of ATP, only oligopeptides shorter than five residues are hydrolyzed (such as succinyl-Leu-Tyr-|-NHMec, and Leu-Tyr-Leu-|-Tyr-Trp, in which cleavage of the -Tyr-|-Leu- and -Tyr-|-Trp bonds also occurs).. Functionally, cleaves peptides in various proteins in a process that requires ATP hydrolysis. Has a chymotrypsin-like activity. Plays a major role in the degradation of misfolded proteins. The chain is ATP-dependent Clp protease proteolytic subunit from Vesicomyosocius okutanii subsp. Calyptogena okutanii (strain HA).